A 292-amino-acid polypeptide reads, in one-letter code: Protease HtpX homolog (292 aa).

2 helical membrane passes run 4–24 (IALFLLTNVAVVVVLGIVASL) and 38–58 (LGALLGFAFIMGFGGAIISLL). His-144 serves as a coordination point for Zn(2+). Glu-145 is a catalytic residue. His-148 provides a ligand contact to Zn(2+). Helical transmembrane passes span 152–172 (GDMVTMALIQGVMNTFVVFLS) and 199–219 (ITTIVLDIVLGFLAAIIVAWF). A Zn(2+)-binding site is contributed by Glu-224.

This sequence belongs to the peptidase M48B family. Requires Zn(2+) as cofactor.

The protein resides in the cell inner membrane. This Acidovorax ebreus (strain TPSY) (Diaphorobacter sp. (strain TPSY)) protein is Protease HtpX homolog.